An 819-amino-acid chain; its full sequence is MDSFFKNSYLDPKAVRAQLPKRADLAAPSEPMTVALAISGSIKSKNVIKWALNKFGSDKNVTFKLIHIHPKITTLPTASGNIVSISEELEEVAAAYRQKVMQETKETLLKPFKKMCERKKLKIDETRFESSLTKVAVELQVLESNSVAVAITKEVNQHLISNLIIGRSSQAASSRNYDITASISASVSNLCTVYVVSNGGVHILAKDTSDTERNDTSIESGFERTSSSCSSGSGANSDVMSNALKSNPHTLSNKRMQNLPTIVRGVSVPMETSSTESDETKKRSSDAAEEASKRSSPETSRSVSWNPQFRDFDERKDAMSSMSSNFEYGNVVTPLGHYFTDNQDTLNEISKLRAELRHAHEMYAVAQVETLDASRKLNELKFEELTLLEHETKGIAKKETEKFEQKRREEREAAQRREAEMKATHEAKEKEKLEESSLVAPKLQYQEFTWEEIINATSSFSEDLKIGMGAYGDVYKCNLHHTIAAVKVLHSAESSLSKQFDQELEILSKIRHPHLVLLLGACPDHGALVYEYMENGSLEDRLFQVNDSQPIPWFVRLRIAWEVASALVFLHKSKPTPIIHRDLKPANILLNHNFVSKVGDVGLSTMIQAADPLSTKFTMYKQTSPVGTLCYIDPEYQRTGRISPKSDVYAFGMIILQLLTGQQAMALTYTVETAMENNNDDELIQILDEKAGNWPIEETRQLAALALQCTELRSKDRPDLEDQILPVLESLKKVADKARNSLSAAPSQPPSHFFCPLLKDVMKEPCIAADGYTYDRRAIEEWMENHRTSPVTNSPLQNVNLLPNHTLYAAIVEWRNRNQ.

2 disordered regions span residues 208–309 (TSDT…NPQF) and 398–433 (KETEKFEQKRREEREAAQRREAEMKATHEAKEKEKL). Residues 223 to 237 (ERTSSSCSSGSGANS) show a composition bias toward low complexity. A compositionally biased stretch (polar residues) spans 238 to 260 (DVMSNALKSNPHTLSNKRMQNLP). The span at 278-296 (DETKKRSSDAAEEASKRSS) shows a compositional bias: basic and acidic residues. Over residues 297–307 (PETSRSVSWNP) the composition is skewed to polar residues. Positions 395 to 437 (IAKKETEKFEQKRREEREAAQRREAEMKATHEAKEKEKLEESS) form a coiled coil. Residues 460-728 (FSEDLKIGMG…DLEDQILPVL (269 aa)) form the Protein kinase domain. Residues 466-474 (IGMGAYGDV) and Lys-487 contribute to the ATP site. The active-site Proton acceptor is the Asp-582. The U-box domain maps to 748 to 819 (QPPSHFFCPL…AIVEWRNRNQ (72 aa)).

The protein belongs to the protein kinase superfamily. Ser/Thr protein kinase family.

It catalyses the reaction L-seryl-[protein] + ATP = O-phospho-L-seryl-[protein] + ADP + H(+). The catalysed reaction is L-threonyl-[protein] + ATP = O-phospho-L-threonyl-[protein] + ADP + H(+). The enzyme catalyses S-ubiquitinyl-[E2 ubiquitin-conjugating enzyme]-L-cysteine + [acceptor protein]-L-lysine = [E2 ubiquitin-conjugating enzyme]-L-cysteine + N(6)-ubiquitinyl-[acceptor protein]-L-lysine.. It functions in the pathway protein modification; protein ubiquitination. Functionally, functions as an E3 ubiquitin ligase. This is Putative U-box domain-containing protein 53 (PUB53) from Arabidopsis thaliana (Mouse-ear cress).